The primary structure comprises 203 residues: Cytochrome c biogenesis ATP-binding export protein CcmA (203 aa).

The 202-residue stretch at 2–203 (LEALDLAGVR…KTSQTVRMGA (202 aa)) folds into the ABC transporter domain. 34–41 (GENGSGKT) serves as a coordination point for ATP.

The protein belongs to the ABC transporter superfamily. CcmA exporter (TC 3.A.1.107) family. As to quaternary structure, the complex is composed of two ATP-binding proteins (CcmA) and two transmembrane proteins (CcmB).

The protein localises to the cell inner membrane. It carries out the reaction heme b(in) + ATP + H2O = heme b(out) + ADP + phosphate + H(+). Its function is as follows. Part of the ABC transporter complex CcmAB involved in the biogenesis of c-type cytochromes; once thought to export heme, this seems not to be the case, but its exact role is uncertain. Responsible for energy coupling to the transport system. The protein is Cytochrome c biogenesis ATP-binding export protein CcmA of Pseudomonas aeruginosa.